The sequence spans 788 residues: Elongator complex protein 2 (788 aa).

8 WD repeats span residues Gly-13–Val-51, Gly-57–Cys-96, His-102–Gly-139, Gly-200–Asp-243, Gly-279–Val-318, Gly-336–Gln-377, Gly-383–Arg-422, and Ile-437–Leu-475. A disordered region spans residues Pro-490–Leu-530. Position 492 is a phosphoserine (Ser-492). Acidic residues predominate over residues Asp-507 to Glu-517. WD repeat units follow at residues Gly-556–Pro-600, Phe-604–Glu-643, Pro-651–Tyr-692, Lys-699–Ile-742, and Thr-750–Glu-788.

Belongs to the WD repeat ELP2 family. Component of the elongator complex which consists of ELP1/IKI3, ELP2, ELP3, ELP4, ELP5/IKI1 and ELP6. The elongator complex is composed of two copies of the Elp123 subcomplex (composed of ELP1/IKI3, ELP2 and ELP3) and two copies of the Elp456 subcomplex (composed of ELP4, ELP5/IKI1 and ELP6). The Elp123 subcomplex forms a two-lobed scaffold, which binds the Elp456 subcomplex asymmetrically. In the complex, ELP2 interacts with ELP1/IKI3. In each lobe, ELP2 is tightly sandwiched between ELP1/IKI3 and ELP3. The Elp123 subcomplex binds tRNA through ELP1/IKI3 and ELP3 and can bind 2 tRNAs simultaneously. tRNA-binding induces conformational rearrangements which precisely position the targeted anticodon base in the active site. The Elp456 subcomplex binds tRNA and has ATPase activity. Interacts with KTI11/DPH3.

The protein resides in the cytoplasm. It is found in the nucleus. It participates in tRNA modification; 5-methoxycarbonylmethyl-2-thiouridine-tRNA biosynthesis. Its function is as follows. Component of the elongator complex, a multiprotein complex which is required for multiple tRNA modifications, including mcm5U (5-methoxycarbonylmethyl uridine), mcm5s2U (5-methoxycarbonylmethyl-2-thiouridine), and ncm5U (5-carbamoylmethyl uridine). The elongator complex catalyzes formation of carboxymethyluridine in the wobble base at position 34 in tRNAs. It functions as a gamma-toxin target (TOT); disruption of the complex confers resistance to Kluyveromyces lactis toxin zymocin (pGKL1 killer toxin). May also be involved in sensitivity to Pichia inositovora toxin. ELP2 binds to microtubules. Independently, ELP2 may be involved in polarized exocytosis. This chain is Elongator complex protein 2 (ELP2), found in Saccharomyces cerevisiae (strain ATCC 204508 / S288c) (Baker's yeast).